The primary structure comprises 71 residues: Large ribosomal subunit protein bL31 (71 aa).

The protein belongs to the bacterial ribosomal protein bL31 family. Type A subfamily. Part of the 50S ribosomal subunit.

Functionally, binds the 23S rRNA. The sequence is that of Large ribosomal subunit protein bL31 from Metamycoplasma arthritidis (strain 158L3-1) (Mycoplasma arthritidis).